The primary structure comprises 937 residues: MORC family CW-type zinc finger protein 4 (937 aa).

A CW-type zinc finger spans residues 420–472; that stretch reads KVPDQTWVQCDECLKWRKLPGKIDPSMLPARWFCYYNSHPKYRRCSVPEEQEL. Residues cysteine 429, cysteine 432, cysteine 453, and cysteine 464 each contribute to the Zn(2+) site. The tract at residues 606–637 is disordered; it reads PEGENSHDKSSSERSTPPYLFPEYPEASKNTG. Residues 762-876 are a coiled coil; the sequence is KLKNQRELEE…LEMLQKAQVS (115 aa).

In terms of tissue distribution, expressed at low levels in normal tissues, with highest expression levels in placenta and testis. Expression is significantly increased in subset of diffuse large B-cell lymphomas.

It is found in the nucleus. Histone methylation reader which binds to non-methylated (H3K4me0), monomethylated (H3K4me1), dimethylated (H3K4me2) and trimethylated (H3K4me3) 'Lys-4' on histone H3. The order of binding preference is H3K4me3 &gt; H3K4me2 &gt; H3K4me1 &gt; H3K4me0. The sequence is that of MORC family CW-type zinc finger protein 4 (MORC4) from Homo sapiens (Human).